The primary structure comprises 232 residues: Phosphoribosylaminoimidazole-succinocarboxamide synthase (232 aa).

The protein belongs to the SAICAR synthetase family.

It carries out the reaction 5-amino-1-(5-phospho-D-ribosyl)imidazole-4-carboxylate + L-aspartate + ATP = (2S)-2-[5-amino-1-(5-phospho-beta-D-ribosyl)imidazole-4-carboxamido]succinate + ADP + phosphate + 2 H(+). Its pathway is purine metabolism; IMP biosynthesis via de novo pathway; 5-amino-1-(5-phospho-D-ribosyl)imidazole-4-carboxamide from 5-amino-1-(5-phospho-D-ribosyl)imidazole-4-carboxylate: step 1/2. This chain is Phosphoribosylaminoimidazole-succinocarboxamide synthase, found in Finegoldia magna (strain ATCC 29328 / DSM 20472 / WAL 2508) (Peptostreptococcus magnus).